We begin with the raw amino-acid sequence, 622 residues long: Low affinity potassium transport system protein Kup (622 aa).

Transmembrane regions (helical) follow at residues 9–29 (LPAI…TSPL), 49–69 (VFGF…IKYL), 103–123 (VIMG…TPAI), 137–157 (PQLD…LFMI), 165–185 (VGKL…VLGL), 213–233 (VSFI…ALYA), 247–267 (WFTV…ALLL), 276–296 (PFFL…AALA), 337–357 (IYIP…IVSF), 363–383 (LAAA…ILST), 396–416 (FVAL…SANL), and 419–439 (LLSG…IMTT).

This sequence belongs to the HAK/KUP transporter (TC 2.A.72) family.

Its subcellular location is the cell inner membrane. The enzyme catalyses K(+)(in) + H(+)(in) = K(+)(out) + H(+)(out). Its function is as follows. Responsible for the low-affinity transport of potassium into the cell. Likely operates as a K(+):H(+) symporter. This Salmonella typhi protein is Low affinity potassium transport system protein Kup.